A 91-amino-acid polypeptide reads, in one-letter code: Acylphosphatase (91 aa).

One can recognise an Acylphosphatase-like domain in the interval 6 to 91 (CMRCYISGRV…WEDYITFDVL (86 aa)). Catalysis depends on residues arginine 21 and asparagine 39.

Belongs to the acylphosphatase family.

It catalyses the reaction an acyl phosphate + H2O = a carboxylate + phosphate + H(+). This is Acylphosphatase (acyP) from Legionella pneumophila (strain Lens).